A 153-amino-acid chain; its full sequence is Ubiquitin-conjugating enzyme E2 36 (153 aa).

The UBC core domain maps to 5-151 (NLPRRIIKET…AKEWTRLYAS (147 aa)). The Glycyl thioester intermediate role is filled by Cys89.

It belongs to the ubiquitin-conjugating enzyme family. As to quaternary structure, interacts with yeast and human Mms2, with the RING domain of RGLG2 and with UEV1A, UEV1B, UEV1C and UEV1D. As to expression, ubiquitously expressed at low level.

It carries out the reaction S-ubiquitinyl-[E1 ubiquitin-activating enzyme]-L-cysteine + [E2 ubiquitin-conjugating enzyme]-L-cysteine = [E1 ubiquitin-activating enzyme]-L-cysteine + S-ubiquitinyl-[E2 ubiquitin-conjugating enzyme]-L-cysteine.. It participates in protein modification; protein ubiquitination. Its function is as follows. Catalyzes the synthesis of non-canonical poly-ubiquitin chains that are linked through 'Lys-63'. This type of poly-ubiquitination does not lead to protein degradation by the proteasome. Mediates transcriptional activation of target genes. Required for postreplication repair of UV-damaged DNA and for adapting root developmental programs to suboptimal availability of iron. This Arabidopsis thaliana (Mouse-ear cress) protein is Ubiquitin-conjugating enzyme E2 36 (UBC36).